Here is a 64-residue protein sequence, read N- to C-terminus: Large ribosomal subunit protein uL29 (64 aa).

Belongs to the universal ribosomal protein uL29 family.

The chain is Large ribosomal subunit protein uL29 from Psychrobacter sp. (strain PRwf-1).